A 231-amino-acid chain; its full sequence is Probable septum site-determining protein MinC (231 aa).

The protein belongs to the MinC family. As to quaternary structure, interacts with MinD and FtsZ.

Its function is as follows. Cell division inhibitor that blocks the formation of polar Z ring septums. Rapidly oscillates between the poles of the cell to destabilize FtsZ filaments that have formed before they mature into polar Z rings. Prevents FtsZ polymerization. The protein is Probable septum site-determining protein MinC of Baumannia cicadellinicola subsp. Homalodisca coagulata.